The primary structure comprises 355 residues: 3-dehydroquinate synthase (355 aa).

Residues 71-76 (EGEASK), 105-109 (GVVGD), 129-130 (TS), K142, and K151 contribute to the NAD(+) site. Zn(2+) contacts are provided by E184, H246, and H263.

It belongs to the sugar phosphate cyclases superfamily. Dehydroquinate synthase family. It depends on Co(2+) as a cofactor. The cofactor is Zn(2+). Requires NAD(+) as cofactor.

It localises to the cytoplasm. It carries out the reaction 7-phospho-2-dehydro-3-deoxy-D-arabino-heptonate = 3-dehydroquinate + phosphate. It participates in metabolic intermediate biosynthesis; chorismate biosynthesis; chorismate from D-erythrose 4-phosphate and phosphoenolpyruvate: step 2/7. Functionally, catalyzes the conversion of 3-deoxy-D-arabino-heptulosonate 7-phosphate (DAHP) to dehydroquinate (DHQ). This is 3-dehydroquinate synthase from Streptococcus thermophilus (strain CNRZ 1066).